Consider the following 476-residue polypeptide: Bifunctional protein HldE (476 aa).

A ribokinase region spans residues 1–319 (MKISLPAFEK…EALSLSHGES (319 aa)). Residue 195 to 198 (NMSE) coordinates ATP. Residue Asp264 is part of the active site. Residues 345-476 (MTNGCFDILH…AIIQNIMANQ (132 aa)) are cytidylyltransferase.

It in the N-terminal section; belongs to the carbohydrate kinase PfkB family. The protein in the C-terminal section; belongs to the cytidylyltransferase family. In terms of assembly, homodimer.

It catalyses the reaction D-glycero-beta-D-manno-heptose 7-phosphate + ATP = D-glycero-beta-D-manno-heptose 1,7-bisphosphate + ADP + H(+). It carries out the reaction D-glycero-beta-D-manno-heptose 1-phosphate + ATP + H(+) = ADP-D-glycero-beta-D-manno-heptose + diphosphate. It functions in the pathway nucleotide-sugar biosynthesis; ADP-L-glycero-beta-D-manno-heptose biosynthesis; ADP-L-glycero-beta-D-manno-heptose from D-glycero-beta-D-manno-heptose 7-phosphate: step 1/4. It participates in nucleotide-sugar biosynthesis; ADP-L-glycero-beta-D-manno-heptose biosynthesis; ADP-L-glycero-beta-D-manno-heptose from D-glycero-beta-D-manno-heptose 7-phosphate: step 3/4. Catalyzes the phosphorylation of D-glycero-D-manno-heptose 7-phosphate at the C-1 position to selectively form D-glycero-beta-D-manno-heptose-1,7-bisphosphate. In terms of biological role, catalyzes the ADP transfer from ATP to D-glycero-beta-D-manno-heptose 1-phosphate, yielding ADP-D-glycero-beta-D-manno-heptose. In Shewanella pealeana (strain ATCC 700345 / ANG-SQ1), this protein is Bifunctional protein HldE.